Reading from the N-terminus, the 233-residue chain is Small ribosomal subunit protein uS3 (233 aa).

In terms of domain architecture, KH type-2 spans Val-39–Arg-107.

It belongs to the universal ribosomal protein uS3 family. In terms of assembly, part of the 30S ribosomal subunit. Forms a tight complex with proteins S10 and S14.

Its function is as follows. Binds the lower part of the 30S subunit head. Binds mRNA in the 70S ribosome, positioning it for translation. The sequence is that of Small ribosomal subunit protein uS3 from Vibrio vulnificus (strain CMCP6).